The sequence spans 156 residues: UPF0336 protein SACE_6876 (156 aa).

The MaoC-like domain maps to 8–128 (IGREYPPTPA…DFLTVRAEIT (121 aa)).

Belongs to the UPF0336 family.

This is UPF0336 protein SACE_6876 from Saccharopolyspora erythraea (strain ATCC 11635 / DSM 40517 / JCM 4748 / NBRC 13426 / NCIMB 8594 / NRRL 2338).